A 582-amino-acid polypeptide reads, in one-letter code: DNA mismatch repair protein MutL (582 aa).

This sequence belongs to the DNA mismatch repair MutL/HexB family.

Its function is as follows. This protein is involved in the repair of mismatches in DNA. It is required for dam-dependent methyl-directed DNA mismatch repair. May act as a 'molecular matchmaker', a protein that promotes the formation of a stable complex between two or more DNA-binding proteins in an ATP-dependent manner without itself being part of a final effector complex. This Acidiphilium cryptum (strain JF-5) protein is DNA mismatch repair protein MutL.